The primary structure comprises 92 residues: DNA/RNA-binding protein Alba (92 aa).

N6-acetyllysine is present on Lys-11.

This sequence belongs to the histone-like Alba family. Post-translationally, acetylated. Acetylation at Lys-11 decreases DNA-binding affinity.

Its subcellular location is the cytoplasm. It localises to the chromosome. In terms of biological role, binds double-stranded DNA tightly but without sequence specificity. Involved in DNA compaction. This chain is DNA/RNA-binding protein Alba, found in Pyrobaculum calidifontis (strain DSM 21063 / JCM 11548 / VA1).